The primary structure comprises 406 residues: Imidazolonepropionase (406 aa).

Fe(3+)-binding residues include His-67 and His-69. 2 residues coordinate Zn(2+): His-67 and His-69. Arg-76, Tyr-139, and His-172 together coordinate 4-imidazolone-5-propanoate. Position 139 (Tyr-139) interacts with N-formimidoyl-L-glutamate. A Fe(3+)-binding site is contributed by His-237. His-237 is a binding site for Zn(2+). 4-imidazolone-5-propanoate is bound at residue Gln-240. Residue Asp-312 coordinates Fe(3+). Residue Asp-312 participates in Zn(2+) binding. Asn-314 and Gly-316 together coordinate N-formimidoyl-L-glutamate. Thr-317 provides a ligand contact to 4-imidazolone-5-propanoate.

Belongs to the metallo-dependent hydrolases superfamily. HutI family. It depends on Zn(2+) as a cofactor. Fe(3+) is required as a cofactor.

Its subcellular location is the cytoplasm. The catalysed reaction is 4-imidazolone-5-propanoate + H2O = N-formimidoyl-L-glutamate. The protein operates within amino-acid degradation; L-histidine degradation into L-glutamate; N-formimidoyl-L-glutamate from L-histidine: step 3/3. In terms of biological role, catalyzes the hydrolytic cleavage of the carbon-nitrogen bond in imidazolone-5-propanoate to yield N-formimidoyl-L-glutamate. It is the third step in the universal histidine degradation pathway. The polypeptide is Imidazolonepropionase (Paraburkholderia phymatum (strain DSM 17167 / CIP 108236 / LMG 21445 / STM815) (Burkholderia phymatum)).